The primary structure comprises 143 residues: SsrA-binding protein (143 aa).

This sequence belongs to the SmpB family.

It localises to the cytoplasm. Functionally, required for rescue of stalled ribosomes mediated by trans-translation. Binds to transfer-messenger RNA (tmRNA), required for stable association of tmRNA with ribosomes. tmRNA and SmpB together mimic tRNA shape, replacing the anticodon stem-loop with SmpB. tmRNA is encoded by the ssrA gene; the 2 termini fold to resemble tRNA(Ala) and it encodes a 'tag peptide', a short internal open reading frame. During trans-translation Ala-aminoacylated tmRNA acts like a tRNA, entering the A-site of stalled ribosomes, displacing the stalled mRNA. The ribosome then switches to translate the ORF on the tmRNA; the nascent peptide is terminated with the 'tag peptide' encoded by the tmRNA and targeted for degradation. The ribosome is freed to recommence translation, which seems to be the essential function of trans-translation. The chain is SsrA-binding protein from Deinococcus geothermalis (strain DSM 11300 / CIP 105573 / AG-3a).